The primary structure comprises 226 residues: Large ribosomal subunit protein uL3 (226 aa).

The interval 135 to 158 (MSSQRASHGNSRSHNVPGSIGMAQ) is disordered. Positions 137–150 (SQRASHGNSRSHNV) are enriched in polar residues. Position 158 is an N5-methylglutamine (Gln158).

It belongs to the universal ribosomal protein uL3 family. As to quaternary structure, part of the 50S ribosomal subunit. Forms a cluster with proteins L14 and L19. In terms of processing, methylated by PrmB.

Its function is as follows. One of the primary rRNA binding proteins, it binds directly near the 3'-end of the 23S rRNA, where it nucleates assembly of the 50S subunit. In Polaromonas naphthalenivorans (strain CJ2), this protein is Large ribosomal subunit protein uL3.